The chain runs to 1311 residues: Nephrocystin-3 (1311 aa).

The stretch at S81–Q183 forms a coiled coil. 9 TPR repeats span residues L889 to M923, A927 to A960, A969 to A1002, A1011 to S1044, A1077 to V1110, A1119 to A1152, A1161 to S1194, A1203 to S1236, and G1245 to E1278.

It localises to the cell projection. Its subcellular location is the cilium. Its function is as follows. Required for normal ciliary development and function. Inhibits disheveled-1-induced canonical Wnt-signaling activity and may also play a role in the control of non-canonical Wnt signaling that regulates planar cell polarity. Probably acts as a molecular switch between different Wnt signaling pathways. Required for proper convergent extension cell movements. The protein is Nephrocystin-3 (nphp3) of Xenopus tropicalis (Western clawed frog).